We begin with the raw amino-acid sequence, 336 residues long: Aspartate--ammonia ligase (336 aa).

It belongs to the class-II aminoacyl-tRNA synthetase family. AsnA subfamily.

The protein resides in the cytoplasm. The catalysed reaction is L-aspartate + NH4(+) + ATP = L-asparagine + AMP + diphosphate + H(+). The protein operates within amino-acid biosynthesis; L-asparagine biosynthesis; L-asparagine from L-aspartate (ammonia route): step 1/1. The sequence is that of Aspartate--ammonia ligase from Limosilactobacillus fermentum (strain NBRC 3956 / LMG 18251) (Lactobacillus fermentum).